The chain runs to 360 residues: Phospho-N-acetylmuramoyl-pentapeptide-transferase (360 aa).

10 helical membrane-spanning segments follow: residues 16 to 36 (FAVFQYLTLRGILGVLTALVL), 73 to 93 (TMGGALILSSIGVSTLLWADL), 97 to 117 (YVWVVLLVTLLFGAIGWVDDY), 134 to 154 (YFWQSVFGLGAAIFLYMTAST), 168 to 188 (YSIPLGAGFIVLTYFVIVGSS), 199 to 219 (GLAIMPTVMVGGGLGIFCYLS), 236 to 256 (AGELIVFCGALIGAGLGFLWF), 263 to 283 (VFMGDVGALALGAALGTIAVI), 288 to 308 (IVLFIMGGVFVMETLSVVIQV), and 338 to 358 (VIVRFWIITVILVLIGLATLK).

This sequence belongs to the glycosyltransferase 4 family. MraY subfamily. Mg(2+) is required as a cofactor.

Its subcellular location is the cell inner membrane. It catalyses the reaction UDP-N-acetyl-alpha-D-muramoyl-L-alanyl-gamma-D-glutamyl-meso-2,6-diaminopimeloyl-D-alanyl-D-alanine + di-trans,octa-cis-undecaprenyl phosphate = di-trans,octa-cis-undecaprenyl diphospho-N-acetyl-alpha-D-muramoyl-L-alanyl-D-glutamyl-meso-2,6-diaminopimeloyl-D-alanyl-D-alanine + UMP. It functions in the pathway cell wall biogenesis; peptidoglycan biosynthesis. Its function is as follows. Catalyzes the initial step of the lipid cycle reactions in the biosynthesis of the cell wall peptidoglycan: transfers peptidoglycan precursor phospho-MurNAc-pentapeptide from UDP-MurNAc-pentapeptide onto the lipid carrier undecaprenyl phosphate, yielding undecaprenyl-pyrophosphoryl-MurNAc-pentapeptide, known as lipid I. This is Phospho-N-acetylmuramoyl-pentapeptide-transferase from Pseudomonas fluorescens (strain Pf0-1).